The sequence spans 430 residues: MSLNKCLLFALLAIVASASVSAERVRYDNYRMYKVNSENAKQLEVLKDLEGSSDSIMFLDGVHLVGADIQIIVAPHKVPDFLEILGKSEIKYELQSRDVQKSLDEIDEKVAIKGRATTAYNWAQYYELDDTYAWLQSLAQTNPGVVTLIEGGKTYQGRSILGVKITKGGETINGKAKPGIFLEAGIHAREWIAPAAATFIINQLLTSEVENIKELAENYTWYVLPHANPDGYVYTHTTNRLWRKTRTPYGSCFGADPNRNWGFHWNEVGASSSACSDTYAGPSAFSEIETLSLSKFIEGLKGKVQLYLSLHAYSQYLLYPYGHTSDLPDNVADFEKVFDASIAAVNKRYGTTYTGGNIYDAIYPAAGASVDWAYGTQDVRMAFCYELRPSSTSYLTGFKLPAEQIVPASEELLDSIVAMATEVKSLGYFD.

The N-terminal stretch at 1–22 is a signal peptide; sequence MSLNKCLLFALLAIVASASVSA. The Peptidase M14 domain occupies 124–423; the sequence is QYYELDDTYA…DSIVAMATEV (300 aa). The Zn(2+) site is built by His187 and Glu190. An intrachain disulfide couples Cys252 to Cys275. His311 contacts Zn(2+). Residue Glu386 is the Proton donor/acceptor of the active site.

It belongs to the peptidase M14 family. Requires Zn(2+) as cofactor.

The protein resides in the secreted. This chain is Zinc carboxypeptidase A 1, found in Drosophila melanogaster (Fruit fly).